The chain runs to 339 residues: Transmembrane protein 120B (339 aa).

The stretch at methionine 1 to glutamine 77 forms a coiled coil. The next 6 membrane-spanning stretches (helical) occupy residues glycine 102–alanine 124, phenylalanine 132–histidine 152, valine 159–isoleucine 179, glycine 187–proline 207, phenylalanine 270–phenylalanine 290, and glutamine 302–leucine 322.

It belongs to the TMEM120 family. As to quaternary structure, heterooligomer with TMEM120A.

It localises to the nucleus inner membrane. Functionally, necessary for efficient adipogenesis. Does not show ion channel activity. The protein is Transmembrane protein 120B of Homo sapiens (Human).